A 328-amino-acid chain; its full sequence is Fructokinase-2 (328 aa).

This sequence belongs to the carbohydrate kinase PfkB family.

The catalysed reaction is D-fructose + ATP = D-fructose 6-phosphate + ADP + H(+). The protein operates within glycan biosynthesis; starch biosynthesis. May play an important role in maintaining the flux of carbon towards starch formation. The sequence is that of Fructokinase-2 (FRK2) from Solanum habrochaites (Wild tomato).